A 171-amino-acid polypeptide reads, in one-letter code: MINFNELIKVGNFNKSHGIKGEISFVFTNNFFFKGKNSFLICEMEGIFIPFRVESYRSISNSTVLVKLKNINTIEQTKLLTYQEVFLPKKQSAENTKLNYFSWDHYIGFNIIDEKNREIGSITDIDKSTINTLFIVEKESKEILIPTANEMIVTIDEKRKIIYMKLPVGLL.

Residues 97–170 (KLNYFSWDHY…IIYMKLPVGL (74 aa)) form the PRC barrel domain.

The protein belongs to the RimM family. Binds ribosomal protein uS19.

It localises to the cytoplasm. An accessory protein needed during the final step in the assembly of 30S ribosomal subunit, possibly for assembly of the head region. Essential for efficient processing of 16S rRNA. May be needed both before and after RbfA during the maturation of 16S rRNA. It has affinity for free ribosomal 30S subunits but not for 70S ribosomes. This is Ribosome maturation factor RimM from Azobacteroides pseudotrichonymphae genomovar. CFP2.